The chain runs to 207 residues: Large ribosomal subunit protein uL4 (207 aa).

The interval 44-77 (RRQGTHDTKTRSEVRGGGRKPWRQKGTGRARHGT) is disordered. The span at 47–59 (GTHDTKTRSEVRG) shows a compositional bias: basic and acidic residues. Residues 60–77 (GGRKPWRQKGTGRARHGT) show a composition bias toward basic residues.

The protein belongs to the universal ribosomal protein uL4 family. As to quaternary structure, part of the 50S ribosomal subunit.

Functionally, one of the primary rRNA binding proteins, this protein initially binds near the 5'-end of the 23S rRNA. It is important during the early stages of 50S assembly. It makes multiple contacts with different domains of the 23S rRNA in the assembled 50S subunit and ribosome. In terms of biological role, forms part of the polypeptide exit tunnel. In Desulforudis audaxviator (strain MP104C), this protein is Large ribosomal subunit protein uL4.